A 310-amino-acid chain; its full sequence is Methionyl-tRNA formyltransferase (310 aa).

109-112 (SLLP) contacts (6S)-5,6,7,8-tetrahydrofolate.

This sequence belongs to the Fmt family.

It carries out the reaction L-methionyl-tRNA(fMet) + (6R)-10-formyltetrahydrofolate = N-formyl-L-methionyl-tRNA(fMet) + (6S)-5,6,7,8-tetrahydrofolate + H(+). Attaches a formyl group to the free amino group of methionyl-tRNA(fMet). The formyl group appears to play a dual role in the initiator identity of N-formylmethionyl-tRNA by promoting its recognition by IF2 and preventing the misappropriation of this tRNA by the elongation apparatus. In Alkaliphilus oremlandii (strain OhILAs) (Clostridium oremlandii (strain OhILAs)), this protein is Methionyl-tRNA formyltransferase.